A 377-amino-acid polypeptide reads, in one-letter code: Erythronate-4-phosphate dehydrogenase (377 aa).

2 residues coordinate substrate: serine 45 and threonine 67. NAD(+) is bound by residues aspartate 147, 210-212 (ASR), and aspartate 236. The active site involves arginine 212. Glutamate 241 is an active-site residue. Residue histidine 258 is the Proton donor of the active site. An NAD(+)-binding site is contributed by glycine 261. Tyrosine 262 contacts substrate.

Belongs to the D-isomer specific 2-hydroxyacid dehydrogenase family. PdxB subfamily. In terms of assembly, homodimer.

It localises to the cytoplasm. The catalysed reaction is 4-phospho-D-erythronate + NAD(+) = (R)-3-hydroxy-2-oxo-4-phosphooxybutanoate + NADH + H(+). Its pathway is cofactor biosynthesis; pyridoxine 5'-phosphate biosynthesis; pyridoxine 5'-phosphate from D-erythrose 4-phosphate: step 2/5. Functionally, catalyzes the oxidation of erythronate-4-phosphate to 3-hydroxy-2-oxo-4-phosphonooxybutanoate. This Aeromonas salmonicida (strain A449) protein is Erythronate-4-phosphate dehydrogenase.